The primary structure comprises 317 residues: Acetyl-coenzyme A carboxylase carboxyl transferase subunit alpha (317 aa).

The region spanning 37 to 291 (KLQEKVDKLL…GNAIEDALDD (255 aa)) is the CoA carboxyltransferase C-terminal domain.

It belongs to the AccA family. In terms of assembly, acetyl-CoA carboxylase is a heterohexamer composed of biotin carboxyl carrier protein (AccB), biotin carboxylase (AccC) and two subunits each of ACCase subunit alpha (AccA) and ACCase subunit beta (AccD).

The protein localises to the cytoplasm. It catalyses the reaction N(6)-carboxybiotinyl-L-lysyl-[protein] + acetyl-CoA = N(6)-biotinyl-L-lysyl-[protein] + malonyl-CoA. It participates in lipid metabolism; malonyl-CoA biosynthesis; malonyl-CoA from acetyl-CoA: step 1/1. Functionally, component of the acetyl coenzyme A carboxylase (ACC) complex. First, biotin carboxylase catalyzes the carboxylation of biotin on its carrier protein (BCCP) and then the CO(2) group is transferred by the carboxyltransferase to acetyl-CoA to form malonyl-CoA. The chain is Acetyl-coenzyme A carboxylase carboxyl transferase subunit alpha from Rhodospirillum centenum (strain ATCC 51521 / SW).